The chain runs to 594 residues: UvrABC system protein C (594 aa).

Residues 14 to 91 form the GIY-YIG domain; it reads DQPGCYLMKD…IKKYDPKYNI (78 aa). In terms of domain architecture, UVR spans 196–231; the sequence is KEVRSELEIKMYEASEKLEFERAKELRDQIAHIDAI.

This sequence belongs to the UvrC family. As to quaternary structure, interacts with UvrB in an incision complex.

The protein localises to the cytoplasm. The UvrABC repair system catalyzes the recognition and processing of DNA lesions. UvrC both incises the 5' and 3' sides of the lesion. The N-terminal half is responsible for the 3' incision and the C-terminal half is responsible for the 5' incision. The sequence is that of UvrABC system protein C from Bacillus cereus (strain G9842).